A 421-amino-acid polypeptide reads, in one-letter code: Putative NBPF family member NBPF7 (421 aa).

Positions 87-143 (IKSMLREELQFKEEKLAEQLKQAEELRQYKVLVHSQERELIQLREKLREGRDASHSL) form a coiled coil. 3 disordered regions span residues 179–251 (VHKL…KITS), 312–334 (EKEV…HDVS), and 402–421 (YNSK…FTED). Olduvai domains follow at residues 190-279 (EDEN…NILL) and 280-391 (ENQN…RMSQ). A compositionally biased stretch (basic and acidic residues) spans 194–217 (DKTKELDKVQESPAPREEQKAEEK). The segment covering 230–243 (TYSNSHGPSDSNPP) has biased composition (polar residues). Residues 312 to 333 (EKEVLQDSPEERVTTSCSDHDV) show a composition bias toward basic and acidic residues. A compositionally biased stretch (polar residues) spans 403–421 (NSKPSSIPNTTLQGSFTED).

It belongs to the NBPF family.

It localises to the cytoplasm. The protein is Putative NBPF family member NBPF7 of Homo sapiens (Human).